Consider the following 154-residue polypeptide: Large ribosomal subunit protein uL13 (154 aa).

It belongs to the universal ribosomal protein uL13 family. Part of the 50S ribosomal subunit.

Functionally, this protein is one of the early assembly proteins of the 50S ribosomal subunit, although it is not seen to bind rRNA by itself. It is important during the early stages of 50S assembly. In Mesorhizobium japonicum (strain LMG 29417 / CECT 9101 / MAFF 303099) (Mesorhizobium loti (strain MAFF 303099)), this protein is Large ribosomal subunit protein uL13.